The primary structure comprises 188 residues: Elongation factor P (188 aa).

It belongs to the elongation factor P family.

It is found in the cytoplasm. The protein operates within protein biosynthesis; polypeptide chain elongation. Involved in peptide bond synthesis. Stimulates efficient translation and peptide-bond synthesis on native or reconstituted 70S ribosomes in vitro. Probably functions indirectly by altering the affinity of the ribosome for aminoacyl-tRNA, thus increasing their reactivity as acceptors for peptidyl transferase. The sequence is that of Elongation factor P from Cereibacter sphaeroides (strain KD131 / KCTC 12085) (Rhodobacter sphaeroides).